The following is a 99-amino-acid chain: NADH-quinone oxidoreductase subunit K (99 aa).

A run of 3 helical transmembrane segments spans residues 3–23, 28–48, and 59–79; these read PDNY…GVLL, IVMF…FVTF, and VVAF…LAII.

Belongs to the complex I subunit 4L family. As to quaternary structure, NDH-1 is composed of 14 different subunits. Subunits NuoA, H, J, K, L, M, N constitute the membrane sector of the complex.

The protein resides in the cell membrane. It carries out the reaction a quinone + NADH + 5 H(+)(in) = a quinol + NAD(+) + 4 H(+)(out). NDH-1 shuttles electrons from NADH, via FMN and iron-sulfur (Fe-S) centers, to quinones in the respiratory chain. The immediate electron acceptor for the enzyme in this species is believed to be a menaquinone. Couples the redox reaction to proton translocation (for every two electrons transferred, four hydrogen ions are translocated across the cytoplasmic membrane), and thus conserves the redox energy in a proton gradient. This is NADH-quinone oxidoreductase subunit K from Mycolicibacterium vanbaalenii (strain DSM 7251 / JCM 13017 / BCRC 16820 / KCTC 9966 / NRRL B-24157 / PYR-1) (Mycobacterium vanbaalenii).